Consider the following 72-residue polypeptide: ATP synthase subunit c (72 aa).

2 helical membrane passes run 1–21 (MSLGVLAAAIAVGLGALGAGI) and 48–68 (MFIGVALVEALPIIGVVFSFI).

The protein belongs to the ATPase C chain family. As to quaternary structure, F-type ATPases have 2 components, F(1) - the catalytic core - and F(0) - the membrane proton channel. F(1) has five subunits: alpha(3), beta(3), gamma(1), delta(1), epsilon(1). F(0) has three main subunits: a(1), b(2) and c(10-14). The alpha and beta chains form an alternating ring which encloses part of the gamma chain. F(1) is attached to F(0) by a central stalk formed by the gamma and epsilon chains, while a peripheral stalk is formed by the delta and b chains.

Its subcellular location is the cell membrane. Functionally, f(1)F(0) ATP synthase produces ATP from ADP in the presence of a proton or sodium gradient. F-type ATPases consist of two structural domains, F(1) containing the extramembraneous catalytic core and F(0) containing the membrane proton channel, linked together by a central stalk and a peripheral stalk. During catalysis, ATP synthesis in the catalytic domain of F(1) is coupled via a rotary mechanism of the central stalk subunits to proton translocation. Key component of the F(0) channel; it plays a direct role in translocation across the membrane. A homomeric c-ring of between 10-14 subunits forms the central stalk rotor element with the F(1) delta and epsilon subunits. The chain is ATP synthase subunit c from Geobacillus kaustophilus (strain HTA426).